A 410-amino-acid polypeptide reads, in one-letter code: Probable serine/threonine-protein kinase PBL8 (410 aa).

Residues 1–10 (MGNCGTRDEA) are compositionally biased toward basic and acidic residues. Residues 1 to 45 (MGNCGTRDEAAVFTPQAQAQQLQKKHSRSVSDLSDPSTPRFRDDS) are disordered. Gly-2 carries the N-myristoyl glycine lipid modification. A lipid anchor (S-palmitoyl cysteine) is attached at Cys-4. Residue Thr-58 is modified to Phosphothreonine. The 282-residue stretch at 69–350 (FRPDYILGEG…DVVETLEPLQ (282 aa)) folds into the Protein kinase domain. Residues 75 to 83 (LGEGGFGTV) and Lys-104 contribute to the ATP site. The residue at position 149 (Tyr-149) is a Phosphotyrosine. Catalysis depends on Asp-199, which acts as the Proton acceptor. A phosphoserine mark is found at Ser-203 and Ser-233. Thr-234 and Thr-239 each carry phosphothreonine. The residue at position 247 (Tyr-247) is a Phosphotyrosine.

It belongs to the protein kinase superfamily. Ser/Thr protein kinase family. Interacts with the Xanthomonas campestris effector XopAC/AvrAC.

It is found in the cell membrane. It catalyses the reaction L-seryl-[protein] + ATP = O-phospho-L-seryl-[protein] + ADP + H(+). The enzyme catalyses L-threonyl-[protein] + ATP = O-phospho-L-threonyl-[protein] + ADP + H(+). May be involved in plant defense signaling. This Arabidopsis thaliana (Mouse-ear cress) protein is Probable serine/threonine-protein kinase PBL8.